The chain runs to 155 residues: 6,7-dimethyl-8-ribityllumazine synthase (155 aa).

5-amino-6-(D-ribitylamino)uracil-binding positions include W24, 58–60 (AFE), and 82–84 (AVI). 87 to 88 (GT) lines the (2S)-2-hydroxy-3-oxobutyl phosphate pocket. Residue H90 is the Proton donor of the active site. F115 provides a ligand contact to 5-amino-6-(D-ribitylamino)uracil. R129 is a (2S)-2-hydroxy-3-oxobutyl phosphate binding site.

It belongs to the DMRL synthase family. In terms of assembly, forms an icosahedral capsid composed of 60 subunits, arranged as a dodecamer of pentamers.

It carries out the reaction (2S)-2-hydroxy-3-oxobutyl phosphate + 5-amino-6-(D-ribitylamino)uracil = 6,7-dimethyl-8-(1-D-ribityl)lumazine + phosphate + 2 H2O + H(+). The protein operates within cofactor biosynthesis; riboflavin biosynthesis; riboflavin from 2-hydroxy-3-oxobutyl phosphate and 5-amino-6-(D-ribitylamino)uracil: step 1/2. Its function is as follows. Catalyzes the formation of 6,7-dimethyl-8-ribityllumazine by condensation of 5-amino-6-(D-ribitylamino)uracil with 3,4-dihydroxy-2-butanone 4-phosphate. This is the penultimate step in the biosynthesis of riboflavin. The polypeptide is 6,7-dimethyl-8-ribityllumazine synthase (Teredinibacter turnerae (strain ATCC 39867 / T7901)).